The primary structure comprises 1258 residues: Phospholipid-transporting ATPase C887.12 (1258 aa).

Disordered stretches follow at residues 1 to 41 (MARD…LGED) and 53 to 83 (YISSSGQNSTNPFLADTRIENSPLGSESKAN). Residues 1-183 (MARDVDNKQN…PKFLKEQFSK (183 aa)) are Cytoplasmic-facing. Positions 53 to 64 (YISSSGQNSTNP) are enriched in polar residues. Residues 184-204 (YANLFFLFTAVVQQIPGITPV) form a helical membrane-spanning segment. Over 205–208 (NRYT) the chain is Lumenal. Residues 209–229 (TIGPMLIVLSVSGIKEIMEDI) traverse the membrane as a helical segment. At 230 to 406 (KRKKQDQELN…TSVEKQVNSQ (177 aa)) the chain is on the cytoplasmic side. The helical transmembrane segment at 407–427 (ILFLLCIFVFLCFASSLGALI) threads the bilayer. Topologically, residues 428–451 (HRSVYGSALSYVKYTSNRAGMFFK) are lumenal. The chain crosses the membrane as a helical span at residues 452–472 (GLLTFWILYSNLVPISLFVTF). The Cytoplasmic portion of the chain corresponds to 473–974 (ELVRYIQAQL…KLILYSFYKN (502 aa)). The active-site 4-aspartylphosphate intermediate is Asp-518. ATP contacts are provided by Asp-518, Lys-519, Thr-520, Glu-613, Phe-654, Ser-656, Lys-659, Lys-677, Arg-710, Thr-711, Thr-790, Gly-791, Asp-792, Arg-883, and Lys-889. Residue Asp-518 participates in Mg(2+) binding. Thr-520 contacts Mg(2+). Position 909 (Asp-909) interacts with Mg(2+). Residues Asn-912 and Asp-913 each contribute to the ATP site. Asp-913 serves as a coordination point for Mg(2+). A helical transmembrane segment spans residues 975–995 (IALYMTQFWYAFCNAFSGQVI). Residues 996-998 (FES) are Lumenal-facing. The helical transmembrane segment at 999 to 1019 (WSISLYNVLFTVLPPVVIGIF) threads the bilayer. Over 1020–1051 (DQFVSAGQLFQYPQLYQLGQRSEFFNLKRFWS) the chain is Cytoplasmic. The helical transmembrane segment at 1052 to 1072 (WITNGFYHSLLLFLCSIAVFY) threads the bilayer. The Lumenal segment spans residues 1073 to 1086 (YDGPNKDGLASGHW). Residues 1087-1107 (VWGTTLYAAILATVLGKAALI) form a helical membrane-spanning segment. Lys-1103 provides a ligand contact to a 1,2-diacyl-sn-glycero-3-phospho-(1D-myo-inositol 4-phosphate). Residues 1108-1115 (SNHWTQYT) are Cytoplasmic-facing. Residues 1116–1136 (VIATLGSFLLWIVFMPIYAVA) form a helical membrane-spanning segment. At 1137-1148 (APAIGFSKEYYG) the chain is on the lumenal side. Residues 1149-1169 (IIPHLYGNLKFWASLLVLPTI) form a helical membrane-spanning segment. Topologically, residues 1170 to 1258 (ALMRDFVWKY…HTRGAYGEMR (89 aa)) are cytoplasmic. Arg-1173, Trp-1177, Lys-1178, Tyr-1189, and His-1190 together coordinate a 1,2-diacyl-sn-glycero-3-phospho-(1D-myo-inositol 4-phosphate).

The protein belongs to the cation transport ATPase (P-type) (TC 3.A.3) family. Type IV subfamily. Mg(2+) serves as cofactor.

The protein localises to the endoplasmic reticulum membrane. It is found in the golgi apparatus. The protein resides in the trans-Golgi network membrane. It carries out the reaction ATP + H2O + phospholipidSide 1 = ADP + phosphate + phospholipidSide 2.. It catalyses the reaction a 1,2-diacyl-sn-glycero-3-phospho-L-serine(out) + ATP + H2O = a 1,2-diacyl-sn-glycero-3-phospho-L-serine(in) + ADP + phosphate + H(+). The catalysed reaction is a 1,2-diacyl-sn-glycero-3-phosphoethanolamine(out) + ATP + H2O = a 1,2-diacyl-sn-glycero-3-phosphoethanolamine(in) + ADP + phosphate + H(+). Functionally, catalytic component of a P4-ATPase flippase complex which catalyzes the hydrolysis of ATP coupled to the transport of phosphatidylserine and small amounts of ethanolamine from the lumen to the cytosolic leaflet of the trans-Golgi network and ensures the maintenance of asymmetric distribution of phospholipids. The polypeptide is Phospholipid-transporting ATPase C887.12 (Schizosaccharomyces pombe (strain 972 / ATCC 24843) (Fission yeast)).